A 471-amino-acid polypeptide reads, in one-letter code: Cleavage and polyadenylation specificity factor subunit 7 (471 aa).

The segment at 34–68 is disordered; that stretch reads VLTAASQPSDDRSSSTEPPPPVRQEPAPKPNNKTP. Pro residues predominate over residues 50–62; the sequence is EPPPPVRQEPAPK. Residues 82 to 162 form the RRM domain; the sequence is AAVYVGSFSW…EKVDVRPATR (81 aa). The disordered stretch occupies residues 176-220; sequence ECVRVPRGGIPPRAHSRDSSDSADGRATPSENLVPSSARVDKPPS. Residues 190-199 show a composition bias toward basic and acidic residues; the sequence is HSRDSSDSAD. Residue threonine 203 is modified to Phosphothreonine. Serine 205 carries the phosphoserine modification. A Glycyl lysine isopeptide (Lys-Gly) (interchain with G-Cter in SUMO2) cross-link involves residue lysine 354. The interval 409 to 471 is disordered; the sequence is SVGASGSSSR…HRDRERDRHH (63 aa). 2 positions are modified to phosphoserine: serine 413 and serine 423. Residues 418–469 form an arg/Ser-rich domain region; that stretch reads RKRHRSRERSPSRSRESSRRHRDLLHNEDRHDDYFQERNREHERHRDRERDR. Composition is skewed to basic and acidic residues over residues 425–434 and 441–471; these read ERSPSRSRES and LLHN…DRHH.

This sequence belongs to the RRM CPSF6/7 family. As to quaternary structure, component of the cleavage factor Im (CFIm) complex which is a heterotetramer composed of two subunits of NUDT21/CPSF5 and two subunits of CPSF6 or CPSF7 or a heterodimer of CPSF6 and CPSF7. The cleavage factor Im (CFIm) complex associates with the CPSF and CSTF complexes to promote the assembly of the core mRNA 3'-processing machinery. Interacts with NUDT21/CPSF5. Interacts (via Arg/Ser-rich domain) with FIP1L1 (preferentially via unphosphorylated form and Arg/Glu/Asp-rich region); this interaction mediates, at least in part, the interaction between the CFIm and CPSF complexes and may be inhibited by CPSF7 hyper-phosphorylation. Phosphorylated. In terms of processing, asymmetrically dimethylated on arginine residues by PRMT1.

It localises to the nucleus. The protein localises to the cytoplasm. Component of the cleavage factor Im (CFIm) complex that functions as an activator of the pre-mRNA 3'-end cleavage and polyadenylation processing required for the maturation of pre-mRNA into functional mRNAs. CFIm contributes to the recruitment of multiprotein complexes on specific sequences on the pre-mRNA 3'-end, so called cleavage and polyadenylation signals (pA signals). Most pre-mRNAs contain multiple pA signals, resulting in alternative cleavage and polyadenylation (APA) producing mRNAs with variable 3'-end formation. The CFIm complex acts as a key regulator of cleavage and polyadenylation site choice during APA through its binding to 5'-UGUA-3' elements localized in the 3'-untranslated region (UTR) for a huge number of pre-mRNAs. CPSF7 activates directly the mRNA 3'-processing machinery. Binds to pA signals in RNA substrates. The polypeptide is Cleavage and polyadenylation specificity factor subunit 7 (Mus musculus (Mouse)).